Here is a 291-residue protein sequence, read N- to C-terminus: Phytanoyl-CoA dioxygenase domain-containing protein 1 (291 aa).

Thr-55 carries the phosphothreonine modification. 2-oxoglutarate-binding positions include Lys-102, Met-141, 156–158 (HQD), and Trp-174. Positions 156 and 158 each coordinate Fe cation. Residue His-246 coordinates Fe cation. Positions 248 and 257 each coordinate 2-oxoglutarate.

It belongs to the PhyH family. PHYHD1 subfamily. Requires Fe cation as cofactor.

2-oxoglutarate(2OG)-dependent dioxygenase that catalyzes the conversion of 2-oxoglutarate to succinate and CO(2) in an iron-dependent manner. However, does not couple 2OG turnover to the hydroxylation of acyl-coenzyme A derivatives, implying that it is not directly involved in phytanoyl coenzyme-A metabolism. Does not show detectable activity towards fatty acid CoA thioesters. This chain is Phytanoyl-CoA dioxygenase domain-containing protein 1 (Phyhd1), found in Rattus norvegicus (Rat).